Here is a 420-residue protein sequence, read N- to C-terminus: Calsequestrin-1 (420 aa).

The first 22 residues, 1–22 (MKGPWLVLAALCLSLANLGPRG), serve as a signal peptide directing secretion. N-linked (GlcNAc...) asparagine glycosylation is present at asparagine 338. Residues 369–420 (LEGEVNTEDDDDDDDDDDDDDDDDDDDDDDDDDDDDDDDDDDDDDDDDDDDD) form a disordered region.

Belongs to the calsequestrin family. As to quaternary structure, monomer; increases in response to a depletion of intracellular calcium. Homodimer. Homotetramer and homopolymer. Can form linear homooligomers. Ca(2+) ions promote oligomerization. In terms of tissue distribution, detected in skeletal muscle (at protein level). Detected in skeletal muscle.

It localises to the endoplasmic reticulum. Its subcellular location is the sarcoplasmic reticulum. It is found in the sarcoplasmic reticulum lumen. The protein resides in the sarcoplasmic reticulum membrane. The protein localises to the mitochondrion matrix. Functionally, calsequestrin is a high-capacity, moderate affinity, calcium-binding protein and thus acts as an internal calcium store in muscle. Calcium ions are bound by clusters of acidic residues at the protein surface, often at the interface between subunits. Can bind around 80 Ca(2+) ions. Regulates the release of lumenal Ca(2+) via the calcium release channel RYR1; this plays an important role in triggering muscle contraction. Negatively regulates store-operated Ca(2+) entry (SOCE) activity. The protein is Calsequestrin-1 of Pelophylax lessonae (Pool frog).